The sequence spans 1133 residues: DNA repair protein rad8 (1133 aa).

Disordered regions lie at residues 1–34 and 392–413; these read MKRK…SKPN and PEAR…EEDV. The residue at position 18 (serine 18) is a Phosphoserine. In terms of domain architecture, Helicase ATP-binding spans 516–705; that stretch reads PNSMPYHRGG…YSLIKFMRYE (190 aa). Position 529–536 (529–536) interacts with ATP; the sequence is DEMGLGKT. The DEGH box motif lies at 656–659; the sequence is DEGH. The RING-type zinc-finger motif lies at 877 to 923; sequence CPICCNEPIQNPLLLNCKHACCGDCLSEHIQYQKRRNIIPPLCHTCR. Residues 971-1125 form the Helicase C-terminal domain; that stretch reads QLRQLTHSSE…EGKQQVQSIE (155 aa).

This sequence belongs to the SNF2/RAD54 helicase family.

It is found in the cytoplasm. It localises to the nucleus. In terms of biological role, probable helicase, member of the UBC2/RAD6 epistasis group. Functions with DNA repair protein rad18 in error-free postreplication DNA repair. Involved in the maintenance of wild-type rates of instability of simple repetitive sequences such as poly(GT) repeats. Plays a role in surviving topoisomerase-mediated DNA damage. This is DNA repair protein rad8 from Schizosaccharomyces pombe (strain 972 / ATCC 24843) (Fission yeast).